We begin with the raw amino-acid sequence, 227 residues long: 2,3-bisphosphoglycerate-dependent phosphoglycerate mutase (227 aa).

Substrate contacts are provided by residues 8-15 (RHGKSVWN), 21-22 (TG), R58, 110-113 (ERMY), K121, 137-138 (RR), and 181-182 (GN). Catalysis depends on H9, which acts as the Tele-phosphohistidine intermediate. E110 functions as the Proton donor/acceptor in the catalytic mechanism.

The protein belongs to the phosphoglycerate mutase family. BPG-dependent PGAM subfamily.

The enzyme catalyses (2R)-2-phosphoglycerate = (2R)-3-phosphoglycerate. The protein operates within carbohydrate degradation; glycolysis; pyruvate from D-glyceraldehyde 3-phosphate: step 3/5. Functionally, catalyzes the interconversion of 2-phosphoglycerate and 3-phosphoglycerate. This is 2,3-bisphosphoglycerate-dependent phosphoglycerate mutase from Chlamydia abortus (strain DSM 27085 / S26/3) (Chlamydophila abortus).